The primary structure comprises 286 residues: MQPALAPAPHPSMQTSAQDHADQVLHDQLLAAHQHLSHPQQPRPQAPATQPPHMQPNTASPRDQNNIDPAISGSAILGAPPQTPPQPEPAPQESPKTYGKRPLSTSKRAAQNRAAQRAFRQRKESYIRKLEEQVKHQEAITEEYKALHAENYQLREYIINLQTRLLDSQGEVPELPGNIDLNQPRADLTLSAPELQRGNAASAGPAPAGPGPQQSQPNQNQGVGPNDDMNSLNRIAVAGLGMRKHPNEDANYLGNNFQARRPRTDDNQTGATETTKQEPDGLPVVS.

Over residues 1 to 10 (MQPALAPAPH) the composition is skewed to pro residues. The disordered stretch occupies residues 1 to 120 (MQPALAPAPH…QNRAAQRAFR (120 aa)). The span at 26-40 (HDQLLAAHQHLSHPQ) shows a compositional bias: low complexity. Residues 41–54 (QPRPQAPATQPPHM) are compositionally biased toward pro residues. Residues 55-67 (QPNTASPRDQNNI) are compositionally biased toward polar residues. A compositionally biased stretch (pro residues) spans 81–92 (PQTPPQPEPAPQ). Positions 102–165 (PLSTSKRAAQ…EYIINLQTRL (64 aa)) constitute a bZIP domain. Residues 103–126 (LSTSKRAAQNRAAQRAFRQRKESY) form a basic motif region. Residues 108 to 118 (RAAQNRAAQRA) show a composition bias toward low complexity. The leucine-zipper stretch occupies residues 130-161 (LEEQVKHQEAITEEYKALHAENYQLREYIINL). The tract at residues 197-286 (RGNAASAGPA…QEPDGLPVVS (90 aa)) is disordered. A compositionally biased stretch (low complexity) spans 198-222 (GNAASAGPAPAGPGPQQSQPNQNQG).

Belongs to the bZIP family.

It localises to the nucleus. In terms of biological role, putative transcription factor. This chain is Putative transcription factor kapC (kapC), found in Aspergillus terreus (strain NIH 2624 / FGSC A1156).